Reading from the N-terminus, the 1258-residue chain is uncharacterized protein (1258 aa).

The stretch at 55–93 (ELASEILGVCWQENGVLAAGISEGTWKRFLAGKQAINAE) is one WD 1 repeat. Positions 112–128 (GGRTKERKDTGTSRQEK) are enriched in basic and acidic residues. Positions 112-138 (GGRTKERKDTGTSRQEKFLSSSHPHTD) are disordered. WD repeat units lie at residues 640-679 (ETLG…LLLI), 682-721 (GHSN…CIKT), 724-763 (GHEH…CLQT), 766-807 (GHTD…RTLK), 809-849 (HTGW…KTYI), 850-889 (GHTN…CIKT), 892-931 (GHTN…CLKA), 934-975 (GNTD…SSLE), 976-1017 (GHTD…QILL), 1019-1059 (HTDW…KTLS), 1060-1101 (EHSD…GILR), 1103-1143 (HSNR…KTLT), 1144-1183 (GHTN…CHHI), and 1186-1227 (GHTH…QILR).

This is an uncharacterized protein from Nostoc sp. (strain PCC 7120 / SAG 25.82 / UTEX 2576).